A 129-amino-acid polypeptide reads, in one-letter code: Thyroid hormone receptor alpha (129 aa).

Residues 26–129 (AEWELIRMVT…EIMSLRAAVR (104 aa)) enclose the NR LBD domain. Arg-91 contributes to the 3,3',5-triiodo-L-thyronine binding site.

It belongs to the nuclear hormone receptor family. NR1 subfamily.

The protein resides in the nucleus. In terms of biological role, nuclear hormone receptor that can act as a repressor or activator of transcription. High affinity receptor for thyroid hormones, including triiodothyronine and thyroxine. The chain is Thyroid hormone receptor alpha (thra1) from Sparus aurata (Gilthead sea bream).